We begin with the raw amino-acid sequence, 145 residues long: Baseplate protein gp46 (145 aa).

Part of a complex composed of three DNA circularization protein N, three baseplate hub protein gp44 and three sub-complex wedge (made of two copies of each baseplate protein gp46, gp47 and gp48) that forms the baseplate.

It is found in the virion. The protein localises to the host cytoplasm. In terms of biological role, component of the baseplate. Probable connector between the central and peripheral parts of the baseplate. Probably involved in tail assembly. The polypeptide is Baseplate protein gp46 (Enterobacteriaceae (Bacteriophage Mu)).